Consider the following 38-residue polypeptide: uncharacterized protein (38 aa).

This sequence belongs to the asfivirus C84L family.

This is an uncharacterized protein from Ornithodoros (relapsing fever ticks).